The sequence spans 107 residues: Histone H4 (107 aa).

Positions Met1–Lys16 are enriched in gly residues. The tract at residues Met1–Ala23 is disordered. A DNA-binding region spans residues Val17–Arg21.

It belongs to the histone H4 family. The nucleosome is a histone octamer containing two molecules each of H2A, H2B, H3 and H4 assembled in one H3-H4 heterotetramer and two H2A-H2B heterodimers. The octamer wraps approximately 147 bp of DNA.

The protein localises to the nucleus. It localises to the chromosome. Its function is as follows. Core component of nucleosome. Nucleosomes wrap and compact DNA into chromatin, limiting DNA accessibility to the cellular machineries which require DNA as a template. Histones thereby play a central role in transcription regulation, DNA repair, DNA replication and chromosomal stability. DNA accessibility is regulated via a complex set of post-translational modifications of histones, also called histone code, and nucleosome remodeling. The polypeptide is Histone H4 (Euplotes crassus).